The chain runs to 515 residues: 2,3-bisphosphoglycerate-independent phosphoglycerate mutase (515 aa).

2 residues coordinate Mn(2+): Asp14 and Ser64. The active-site Phosphoserine intermediate is the Ser64. Residues His125, 155-156 (RD), Arg187, Arg193, 263-266 (RADR), and Lys337 contribute to the substrate site. Mn(2+) contacts are provided by Asp404, His408, Asp445, His446, and His464.

It belongs to the BPG-independent phosphoglycerate mutase family. Monomer. Mn(2+) serves as cofactor.

The enzyme catalyses (2R)-2-phosphoglycerate = (2R)-3-phosphoglycerate. It participates in carbohydrate degradation; glycolysis; pyruvate from D-glyceraldehyde 3-phosphate: step 3/5. Catalyzes the interconversion of 2-phosphoglycerate and 3-phosphoglycerate. The chain is 2,3-bisphosphoglycerate-independent phosphoglycerate mutase from Cronobacter sakazakii (strain ATCC BAA-894) (Enterobacter sakazakii).